The chain runs to 196 residues: Large ribosomal subunit protein bL17 (196 aa).

The interval Ala-133 to Lys-196 is disordered. Positions Ala-134–Ala-143 are enriched in basic and acidic residues. A compositionally biased stretch (acidic residues) spans Glu-152 to Ala-164. The segment covering Ala-184–Lys-196 has biased composition (basic and acidic residues).

Belongs to the bacterial ribosomal protein bL17 family. As to quaternary structure, part of the 50S ribosomal subunit. Contacts protein L32.

The chain is Large ribosomal subunit protein bL17 from Arthrobacter sp. (strain FB24).